Here is a 380-residue protein sequence, read N- to C-terminus: Ceramide synthase 2 (380 aa).

The Lumenal portion of the chain corresponds to 1–40 (MLQTLHDYFWWERLWLPVNLTWADLEDRDGRVYAKASDLY). Asparagine 19 carries N-linked (GlcNAc...) asparagine glycosylation. The chain crosses the membrane as a helical span at residues 41-61 (ITLPLALLFLIIRYFFELYVA). The homeobox-like stretch occupies residues 67–128 (LLNVKEKTRL…RRRRNQDRPS (62 aa)). Residues 131 to 332 (KKFREASWRF…ILRMAHKFIT (202 aa)) enclose the TLC domain. 4 consecutive transmembrane segments (helical) span residues 140–160 (FTFYLIAFIAGTAVIVDKPWF), 181–201 (WYYMIELSFYWSLLFSIASDV), 209–229 (QIIHHVATIILISFSWFANYV), and 264–284 (IFIVFAIVFIITRLVILPFWI). The Last loop motif signature appears at 291–300 (YPLELYPAFF). A helical transmembrane segment spans residues 304–324 (FFNFMMGVLQLLHIFWAYLIL). Residues 325 to 380 (RMAHKFITGKVVEDERSDREETESSEGEEAAAGGGAKNRPLANGHPILNNNHRKND) lie on the Cytoplasmic side of the membrane. A disordered region spans residues 338-380 (DERSDREETESSEGEEAAAGGGAKNRPLANGHPILNNNHRKND). At serine 341 the chain carries Phosphoserine. Positions 344-353 (EETESSEGEE) are enriched in acidic residues. Threonine 346 carries the post-translational modification Phosphothreonine. Residues serine 348 and serine 349 each carry the phosphoserine modification.

Interacts with ATP6V0C, ASGR1, ASGR2 and SLC22A1/OCT1. Interacts with ELOV1, HSD17B12 and TECR. Interacts with NDUFS2. Acetylated. Deacetylation by SIRT3 increases enzyme activity and promotes mitochondrial ceramide accumulation. In terms of processing, phosphorylated at the C-terminus by CK2, leading to increase the ceramide synthase activity.

The protein resides in the endoplasmic reticulum membrane. The catalysed reaction is a very long-chain fatty acyl-CoA + a sphingoid base = an N-(very-long-chain fatty acyl)-sphingoid base + CoA + H(+). It catalyses the reaction docosanoyl-CoA + sphinganine = N-docosanoylsphinganine + CoA + H(+). The enzyme catalyses tetracosanoyl-CoA + sphinganine = N-tetracosanoylsphinganine + CoA + H(+). It carries out the reaction hexacosanoyl-CoA + sphinganine = N-hexacosanoylsphinganine + CoA + H(+). The catalysed reaction is (15Z)-tetracosenoyl-CoA + sphinganine = N-(15Z-tetracosenoyl)-sphinganine + CoA + H(+). It catalyses the reaction 2-hydroxytetracosanoyl-CoA + sphinganine = N-(2-hydroxytetracosanoyl)-sphinganine + CoA + H(+). The enzyme catalyses 2-hydroxydocosanoyl-CoA + sphinganine = N-(2-hydroxydocosanoyl)-sphinganine + CoA + H(+). It carries out the reaction 2-hydroxytetracosenoyl-CoA + sphinganine = N-(2-hydroxytetracosenoyl)-sphinganine + CoA + H(+). The catalysed reaction is tetracosenoyl-CoA + sphinganine = an N-tetracosenoylsphinganine + CoA + H(+). It catalyses the reaction hexacosenoyl-CoA + sphinganine = N-hexacosenoylsphinganine + CoA + H(+). The enzyme catalyses tetracosanoyl-CoA + sphing-4-enine = N-tetracosanoyl-sphing-4-enine + CoA + H(+). It carries out the reaction tetracosenoyl-CoA + sphing-4-enine = N-(tetracosenoyl)-sphing-4-enine + CoA + H(+). The catalysed reaction is heptadecasphing-4-enine + tetracosanoyl-CoA = N-tetracosanoyl-heptadecasphing-4-enine + CoA + H(+). It catalyses the reaction a fatty acyl-CoA + sphing-4-enine = an N-acylsphing-4-enine + CoA + H(+). The enzyme catalyses sphing-4-enine + hexadecanoyl-CoA = N-hexadecanoylsphing-4-enine + CoA + H(+). It carries out the reaction sphing-4-enine + octadecanoyl-CoA = N-octadecanoylsphing-4-enine + CoA + H(+). The catalysed reaction is eicosanoyl-CoA + sphing-4-enine = N-eicosanoyl-sphing-4-enine + CoA + H(+). It catalyses the reaction sphinganine + hexadecanoyl-CoA = N-hexadecanoylsphinganine + CoA + H(+). The enzyme catalyses sphinganine + octadecanoyl-CoA = N-(octadecanoyl)-sphinganine + CoA + H(+). It carries out the reaction sphinganine + (9Z)-octadecenoyl-CoA = N-(9Z-octadecenoyl)-sphinganine + CoA + H(+). The catalysed reaction is eicosanoyl-CoA + sphinganine = N-eicosanoylsphinganine + CoA + H(+). Its pathway is lipid metabolism; sphingolipid metabolism. With respect to regulation, ceramide synthase activity is inhibited by sphingosine-1-phosphate. Functionally, ceramide synthase that catalyzes the transfer of the acyl chain from acyl-CoA to a sphingoid base, with high selectivity toward very-long-chain fatty acyl-CoA (chain length C22-C27). N-acylates sphinganine and sphingosine bases to form dihydroceramides and ceramides in de novo synthesis and salvage pathways, respectively. Plays a non-redundant role in the synthesis of ceramides with very-long-chain fatty acids in kidney, liver and brain. Regulates the abundance of myelin-specific sphingolipids galactosylceramide and sulfatide that affects myelin sheath architecture and motor neuron functions. The polypeptide is Ceramide synthase 2 (Bos taurus (Bovine)).